The chain runs to 199 residues: Recombination protein RecR (199 aa).

The C4-type zinc finger occupies 57-72 (CTVCGHITDIDPCAIC). One can recognise a Toprim domain in the interval 80 to 176 (TVVCVVQDSR…RVTRLAHGLP (97 aa)).

The protein belongs to the RecR family.

Functionally, may play a role in DNA repair. It seems to be involved in an RecBC-independent recombinational process of DNA repair. It may act with RecF and RecO. This chain is Recombination protein RecR, found in Exiguobacterium sp. (strain ATCC BAA-1283 / AT1b).